The primary structure comprises 218 residues: MNQSSLLAEFGDPITRVENALIALKEGRGVLLLDDEDRENEGDIIYSVEHLTNEQMALMIRECSGIVCLCLTDAQADKLELPPMVVNNNSANQTAFTVSIEAKVGVTTGVSAADRVTTIKTAANPHAKPEDLARPGHVFPLRARPGGVMTRRGHTEGTIDLMQMAGLQPAGVLCEVTNPDGTMAKAPEIVAFGHLHNMPVLTIEDMVAYRNQFDLKLA.

D-ribulose 5-phosphate-binding positions include 38–39 (RE), Asp-43, 151–155 (RRGHT), and Glu-175. A Mg(2+)-binding site is contributed by Glu-39. Residues 125–151 (PHAKPEDLARPGHVFPLRARPGGVMTR) form a disordered region. Position 154 (His-154) interacts with Mg(2+).

The protein belongs to the DHBP synthase family. In terms of assembly, homodimer. Mg(2+) is required as a cofactor. Requires Mn(2+) as cofactor.

The catalysed reaction is D-ribulose 5-phosphate = (2S)-2-hydroxy-3-oxobutyl phosphate + formate + H(+). It functions in the pathway cofactor biosynthesis; riboflavin biosynthesis; 2-hydroxy-3-oxobutyl phosphate from D-ribulose 5-phosphate: step 1/1. Catalyzes the conversion of D-ribulose 5-phosphate to formate and 3,4-dihydroxy-2-butanone 4-phosphate. This Vibrio parahaemolyticus serotype O3:K6 (strain RIMD 2210633) protein is 3,4-dihydroxy-2-butanone 4-phosphate synthase.